Reading from the N-terminus, the 542-residue chain is MGARASRHRQSPDQSQSQSPSPHHKHHHHHQTTRAPKPKPKPQPPPPQQPRSQPPPPPRHQPQQAPQQAAAEDGVGRVLGRPMEDVRATYTFGRELGRGQFGVTYLATHKPTGRRYACKSIAARKLARPDDLDDVRREVHIMHHLTGHRNIVELRGAYEDRHSVNLVMELCEGGELFDRIIARGHYSERAAAALCREIVSVVHSCHSMGVMHRDLKPENFLFLNKREDSPLKATDFGLSVFFKPGEQFRDLVGSAYYVAPEVLKRLYGAEADIWSAGVILYILLSGVPPFWAENEDGIFDAVLQGHIDFSSEPWPSISSGAKDLVKRMLRQDPKERLTAAEILNHPWIREDGEAPDKPLDITVISRMKQFRAMNKLKKVALKVVAENLSEEEIVGLKEMFKSLDTDNSGTITLEELRAGLPKLGTKISESELRQLMEAADVDGNGSIDYVEFISATMHMNRLEKEDHIYKAFEYFDKDHSGFITVDELEEALTKYDMGDEATIKEIIAEVDTDHDGRINYQEFVAMMKNNSPEIVPNRRRMF.

Residues 1 to 73 (MGARASRHRQ…QAPQQAAAED (73 aa)) are disordered. Glycine 2 carries N-myristoyl glycine lipidation. Residues 12 to 21 (PDQSQSQSPS) are compositionally biased toward low complexity. Over residues 22 to 40 (PHHKHHHHHQTTRAPKPKP) the composition is skewed to basic residues. The span at 41–60 (KPQPPPPQQPRSQPPPPPRH) shows a compositional bias: pro residues. Low complexity predominate over residues 61 to 71 (QPQQAPQQAAA). Residues 90-348 (YTFGRELGRG…AAEILNHPWI (259 aa)) form the Protein kinase domain. Residues 96–104 (LGRGQFGVT) and lysine 119 each bind ATP. The active-site Proton acceptor is aspartate 214. Residues 354-384 (APDKPLDITVISRMKQFRAMNKLKKVALKVV) form an autoinhibitory domain region. EF-hand domains lie at 391–426 (EEIVGLKEMFKSLDTDNSGTITLEELRAGLPKLGTK), 427–462 (ISESELRQLMEAADVDGNGSIDYVEFISATMHMNRL), 463–497 (EKEDHIYKAFEYFDKDHSGFITVDELEEALTKYDM), and 498–533 (GDEATIKEIIAEVDTDHDGRINYQEFVAMMKNNSPE). Ca(2+) is bound by residues aspartate 404, aspartate 406, serine 408, threonine 410, glutamate 415, aspartate 440, aspartate 442, asparagine 444, serine 446, glutamate 451, aspartate 476, aspartate 478, serine 480, glutamate 487, aspartate 511, aspartate 513, aspartate 515, arginine 517, and glutamate 522.

It belongs to the protein kinase superfamily. Ser/Thr protein kinase family. CDPK subfamily.

The protein resides in the membrane. The enzyme catalyses L-seryl-[protein] + ATP = O-phospho-L-seryl-[protein] + ADP + H(+). It carries out the reaction L-threonyl-[protein] + ATP = O-phospho-L-threonyl-[protein] + ADP + H(+). Its activity is regulated as follows. Activated by calcium. Autophosphorylation may play an important role in the regulation of the kinase activity. In terms of biological role, may play a role in signal transduction pathways that involve calcium as a second messenger. The polypeptide is Calcium-dependent protein kinase 15 (Oryza sativa subsp. japonica (Rice)).